Consider the following 394-residue polypeptide: NAD(P)H-quinone oxidoreductase subunit H (394 aa).

It belongs to the complex I 49 kDa subunit family. As to quaternary structure, NDH-1 can be composed of about 15 different subunits; different subcomplexes with different compositions have been identified which probably have different functions.

The protein resides in the cellular thylakoid membrane. The enzyme catalyses a plastoquinone + NADH + (n+1) H(+)(in) = a plastoquinol + NAD(+) + n H(+)(out). It carries out the reaction a plastoquinone + NADPH + (n+1) H(+)(in) = a plastoquinol + NADP(+) + n H(+)(out). Its function is as follows. NDH-1 shuttles electrons from an unknown electron donor, via FMN and iron-sulfur (Fe-S) centers, to quinones in the respiratory and/or the photosynthetic chain. The immediate electron acceptor for the enzyme in this species is believed to be plastoquinone. Couples the redox reaction to proton translocation, and thus conserves the redox energy in a proton gradient. Cyanobacterial NDH-1 also plays a role in inorganic carbon-concentration. This Prochlorococcus marinus (strain NATL1A) protein is NAD(P)H-quinone oxidoreductase subunit H.